Here is a 447-residue protein sequence, read N- to C-terminus: MTVDEQVSNYYDMLLKRNAGEPEFHQAVAEVLESLKIVLEKDPHYADYGLIQRLCEPERQLIFRVPWVDDQGQVHVNRGFRVQFNSALGPYKGGLRFHPSVNLGIVKFLGFEQIFKNSLTGLPIGGGKGGSDFDPKGKSDLEIMRFCQSFMTELHRHIGEYRDVPAGDIGVGGREIGYLFGHYRRMANQHESGVLTGKGLTWGGSLVRTEATGYGCVYFVSEMIKAKGESISGQKIIVSGSGNVATYAIEKAQELGATVIGFSDSSGWVHTPNGVDVAKLREIKEVRRARVSVYADEVEGATYHTDGSIWDLKCDIALPCATQNELNGENAKTLADNGCRFVAEGANMPSTPEAVEVFRERDIRFGPGKAANAGGVATSALEMQQNASRDSWSFEYTDERLQVIMKNIFKTCAETAAEYGHENDYVVGANIAGFKKVADAMLAQGVI.

Substrate is bound by residues K92, Q113, and K116. Residue K128 is the Proton donor of the active site. A substrate-binding site is contributed by G167. Residues T212 and N243 each contribute to the NADP(+) site. S379 lines the substrate pocket.

It belongs to the Glu/Leu/Phe/Val dehydrogenases family. As to quaternary structure, homohexamer.

It catalyses the reaction L-glutamate + NADP(+) + H2O = 2-oxoglutarate + NH4(+) + NADPH + H(+). Functionally, catalyzes the reversible oxidative deamination of glutamate to alpha-ketoglutarate and ammonia. In Corynebacterium glutamicum (strain ATCC 13032 / DSM 20300 / JCM 1318 / BCRC 11384 / CCUG 27702 / LMG 3730 / NBRC 12168 / NCIMB 10025 / NRRL B-2784 / 534), this protein is NADP-specific glutamate dehydrogenase (gdh).